An 84-amino-acid polypeptide reads, in one-letter code: Cell division topological specificity factor (84 aa).

Belongs to the MinE family.

Functionally, prevents the cell division inhibition by proteins MinC and MinD at internal division sites while permitting inhibition at polar sites. This ensures cell division at the proper site by restricting the formation of a division septum at the midpoint of the long axis of the cell. This chain is Cell division topological specificity factor, found in Chromohalobacter salexigens (strain ATCC BAA-138 / DSM 3043 / CIP 106854 / NCIMB 13768 / 1H11).